Reading from the N-terminus, the 213-residue chain is Ras-related protein Rab-39B (213 aa).

7 residues coordinate GTP: Ser17, Gly20, Lys21, Ser22, Cys23, Ser37, and Thr40. Residue Ser22 participates in Mg(2+) binding. The switch-I stretch occupies residues 35–43; sequence QVSDPTVGV. Residues Thr40 and Asp64 each contribute to the Mg(2+) site. Residues Gly67, His123, Lys124, Asp126, Ala154, and Arg155 each coordinate GTP. The segment at 67–83 is switch-II; it reads GQERFRSITRAYYRNSV. At Ser201 the chain carries Phosphoserine. Residues Cys211 and Cys213 are each lipidated (S-geranylgeranyl cysteine). Cys213 bears the Cysteine methyl ester mark.

Belongs to the small GTPase superfamily. Rab family. Interacts (GDP-bound) with C9orf72; C9orf72 in complex with SMCR8 acts as a GEF for RAB39B. Interacts (in GTP-bound form) with PICK1 (via PDZ domain); a PICK1 homodimer may allow simultaneous association of RAB39B and GRIA2 to PICK1 which is involved in GRIA2 trafficking. Interacts with isoform c of RASSF1; the interaction is strong. Interacts with isoform a of RASSF1; the interaction is weak. Interacts with the DLG4/PSD-95. Interacts (GTP-bound) with HOPS complex components VPS39 and VPS41. Mg(2+) serves as cofactor.

Its subcellular location is the cell membrane. It localises to the cytoplasmic vesicle membrane. The protein resides in the golgi apparatus. The protein localises to the cytoplasmic vesicle. It is found in the autophagosome membrane. Its subcellular location is the autolysosome membrane. The catalysed reaction is GTP + H2O = GDP + phosphate + H(+). Regulated by guanine nucleotide exchange factors (GEFs) including C9orf72-SMCR8 complex, which promote the exchange of bound GDP for free GTP. Regulated by GTPase activating proteins (GAPs) which increase the GTP hydrolysis activity. Inhibited by GDP dissociation inhibitors (GDIs). In terms of biological role, the small GTPases Rab are key regulators of intracellular membrane trafficking, from the formation of transport vesicles to their fusion with membranes. Rabs cycle between an inactive GDP-bound form and an active GTP-bound form that is able to recruit to membranes different sets of downstream effectors directly responsible for vesicle formation, movement, tethering and fusion. RAB39B is involved in autophagy and may function in autophagosome formation. Binds downstream effector PICK1 to ensure selectively GRIA2 exit from the endoplasmic reticulum to the Golgi and to regulate AMPAR composition at the post-synapses and thus synaptic transmission. May regulate the homeostasis of SNCA/alpha-synuclein. This chain is Ras-related protein Rab-39B (RAB39B), found in Bos taurus (Bovine).